Consider the following 357-residue polypeptide: Uroporphyrinogen decarboxylase (357 aa).

Substrate contacts are provided by residues 27–31 (RQAGR), Asp-77, Tyr-154, Ser-209, and His-330.

It belongs to the uroporphyrinogen decarboxylase family. As to quaternary structure, homodimer.

The protein localises to the cytoplasm. The enzyme catalyses uroporphyrinogen III + 4 H(+) = coproporphyrinogen III + 4 CO2. Its pathway is porphyrin-containing compound metabolism; protoporphyrin-IX biosynthesis; coproporphyrinogen-III from 5-aminolevulinate: step 4/4. Its function is as follows. Catalyzes the decarboxylation of four acetate groups of uroporphyrinogen-III to yield coproporphyrinogen-III. This chain is Uroporphyrinogen decarboxylase, found in Acinetobacter baumannii (strain ACICU).